The primary structure comprises 366 residues: DNA primase large subunit PriL (366 aa).

Positions 227, 298, 307, and 314 each coordinate [4Fe-4S] cluster.

The protein belongs to the eukaryotic-type primase large subunit family. As to quaternary structure, heterodimer of a small subunit (PriS) and a large subunit (PriL). Requires [4Fe-4S] cluster as cofactor.

In terms of biological role, regulatory subunit of DNA primase, an RNA polymerase that catalyzes the synthesis of short RNA molecules used as primers for DNA polymerase during DNA replication. Stabilizes and modulates the activity of the small subunit, increasing the rate of DNA synthesis, and conferring RNA synthesis capability. The DNA polymerase activity may enable DNA primase to also catalyze primer extension after primer synthesis. May also play a role in DNA repair. The polypeptide is DNA primase large subunit PriL (Methanocella arvoryzae (strain DSM 22066 / NBRC 105507 / MRE50)).